The sequence spans 327 residues: Aldo-keto reductase family 7 member A3 (327 aa).

Residue Ser2 is modified to Phosphoserine. Met13, Arg18, and Asp40 together coordinate NADP(+). Tyr45 serves as the catalytic Proton donor. Residue His109 participates in citrate binding. Asn140, Asn194, Leu196, Gly198, Arg204, and Arg218 together coordinate NADP(+). 2 residues coordinate citrate: Tyr228 and Arg231. 5 residues coordinate NADP(+): Ser286, Gln290, Gln293, Asn294, and Arg327.

The protein belongs to the aldo/keto reductase family. Aldo/keto reductase 2 subfamily. In terms of assembly, homodimer. Heterodimer with AKR7A2.

The protein resides in the cytoplasm. The catalysed reaction is a primary alcohol + NADP(+) = an aldehyde + NADPH + H(+). It carries out the reaction aflatoxin B1 dialdehyde + NADPH + H(+) = aflatoxin B1 C(6a)-monoaldehyde + NADP(+). The enzyme catalyses aflatoxin B1 dialdehyde + NADPH + H(+) = aflatoxin B1 C(8)-monoaldehyde + NADP(+). It catalyses the reaction aflatoxin B1 C(6a)-monoaldehyde + NADPH + 2 H(+) = aflatoxin B1 triol + NADP(+). Inhibited by citrate. Catalyzes the NADPH-dependent reduction of various carbonyl-containing compounds, including aldehydes, ketones, and toxic products from cellular metabolism or environmental exposure. Can reduce the dialdehyde form of aflatoxin B1 (AFB1) into alcohol derivatives, via monoaldehydes intermediates, thus preventing the formation of protein adducts that contribute to AFB1-induced toxicity. In Rattus norvegicus (Rat), this protein is Aldo-keto reductase family 7 member A3.